The following is a 532-amino-acid chain: Undecaprenyl-phosphate glucose phosphotransferase (532 aa).

Helical transmembrane passes span 81–101 (QVVVLSDAFCVCLAVVACIAW), 110–130 (ELSGALLLANIMAAGAFFLFP), 155–175 (VAFGEVVFCTVLVMLSWPFGV), 183–203 (WLTFVVAILFVERCVGTYILH), and 344–364 (TASVLLLLALAPLLTLVALAI).

The protein belongs to the bacterial sugar transferase family.

The protein resides in the membrane. The enzyme catalyses di-trans,octa-cis-undecaprenyl phosphate + UDP-alpha-D-glucose = alpha-D-glucosyl di-trans,octa-cis-undecaprenyl diphosphate + UMP. In terms of biological role, involved in the biosynthesis of the exopolysaccharide acetan, a water-soluble polysaccharide involved in production of bacterial cellulose (BC). The chain is Undecaprenyl-phosphate glucose phosphotransferase (aceA) from Komagataeibacter xylinus (Gluconacetobacter xylinus).